Reading from the N-terminus, the 493-residue chain is tRNA(Ile)-lysidine synthase, chloroplastic (493 aa).

Residue 68–73 (SGGQDS) coordinates ATP.

Belongs to the tRNA(Ile)-lysidine synthase family.

The protein localises to the plastid. It is found in the chloroplast. The enzyme catalyses cytidine(34) in tRNA(Ile2) + L-lysine + ATP = lysidine(34) in tRNA(Ile2) + AMP + diphosphate + H(+). Its function is as follows. Ligates lysine onto the cytidine present at position 34 of the AUA codon-specific tRNA(Ile) that contains the anticodon CAU, in an ATP-dependent manner. Cytidine is converted to lysidine, thus changing the amino acid specificity of the tRNA from methionine to isoleucine. The protein is tRNA(Ile)-lysidine synthase, chloroplastic of Staurastrum punctulatum (Green alga).